Here is a 208-residue protein sequence, read N- to C-terminus: FMN-dependent NADH:quinone oxidoreductase (208 aa).

Residues Ser-9, 15-17, 96-99, and 140-143 each bind FMN; these read SAS, MYNF, and TRGG.

The protein belongs to the azoreductase type 1 family. In terms of assembly, homodimer. FMN is required as a cofactor.

The enzyme catalyses 2 a quinone + NADH + H(+) = 2 a 1,4-benzosemiquinone + NAD(+). It carries out the reaction N,N-dimethyl-1,4-phenylenediamine + anthranilate + 2 NAD(+) = 2-(4-dimethylaminophenyl)diazenylbenzoate + 2 NADH + 2 H(+). Its function is as follows. Quinone reductase that provides resistance to thiol-specific stress caused by electrophilic quinones. Also exhibits azoreductase activity. Catalyzes the reductive cleavage of the azo bond in aromatic azo compounds to the corresponding amines. In Ralstonia nicotianae (strain ATCC BAA-1114 / GMI1000) (Ralstonia solanacearum), this protein is FMN-dependent NADH:quinone oxidoreductase.